The following is a 488-amino-acid chain: 3-octaprenyl-4-hydroxybenzoate carboxy-lyase (488 aa).

Mn(2+) is bound at residue asparagine 172. Prenylated FMN contacts are provided by residues isoleucine 175–arginine 177, arginine 189–leucine 191, and arginine 194–glycine 195. Residue glutamate 238 coordinates Mn(2+). Aspartate 287 (proton donor) is an active-site residue.

Belongs to the UbiD family. Homohexamer. It depends on prenylated FMN as a cofactor. Mn(2+) is required as a cofactor.

Its subcellular location is the cell membrane. The catalysed reaction is a 4-hydroxy-3-(all-trans-polyprenyl)benzoate + H(+) = a 2-(all-trans-polyprenyl)phenol + CO2. It functions in the pathway cofactor biosynthesis; ubiquinone biosynthesis. Its function is as follows. Catalyzes the decarboxylation of 3-octaprenyl-4-hydroxy benzoate to 2-octaprenylphenol, an intermediate step in ubiquinone biosynthesis. The sequence is that of 3-octaprenyl-4-hydroxybenzoate carboxy-lyase from Pseudomonas putida (strain W619).